Reading from the N-terminus, the 84-residue chain is RNA-binding protein Hfq (84 aa).

Residues 11-71 enclose the Sm domain; the sequence is DTFLNHVRKN…ISTIMPGHPV (61 aa).

It belongs to the Hfq family. As to quaternary structure, homohexamer.

Functionally, RNA chaperone that binds small regulatory RNA (sRNAs) and mRNAs to facilitate mRNA translational regulation in response to envelope stress, environmental stress and changes in metabolite concentrations. Also binds with high specificity to tRNAs. The polypeptide is RNA-binding protein Hfq (Methylorubrum populi (strain ATCC BAA-705 / NCIMB 13946 / BJ001) (Methylobacterium populi)).